A 263-amino-acid chain; its full sequence is Type-2Ba cytolytic delta-endotoxin (263 aa).

This sequence belongs to the cyt1/cyt2 endotoxin family. Post-translationally, active after proteolytic processing.

Kills the larvae of dipteran insects by making pores in the epithelial cell membrane of the insect midgut. This Bacillus thuringiensis subsp. israelensis protein is Type-2Ba cytolytic delta-endotoxin (cyt2Ba1).